The chain runs to 199 residues: Small ribosomal subunit protein uS4 (199 aa).

The S4 RNA-binding domain occupies 91-154 (SRLDNVVYRL…KDLIIVKEAL (64 aa)).

It belongs to the universal ribosomal protein uS4 family. As to quaternary structure, part of the 30S ribosomal subunit. Contacts protein S5. The interaction surface between S4 and S5 is involved in control of translational fidelity.

In terms of biological role, one of the primary rRNA binding proteins, it binds directly to 16S rRNA where it nucleates assembly of the body of the 30S subunit. Its function is as follows. With S5 and S12 plays an important role in translational accuracy. This is Small ribosomal subunit protein uS4 from Phytoplasma mali (strain AT).